A 105-amino-acid polypeptide reads, in one-letter code: Nucleoid-associated protein Ccur92_18190 (105 aa).

It belongs to the YbaB/EbfC family. In terms of assembly, homodimer.

It localises to the cytoplasm. The protein resides in the nucleoid. Functionally, binds to DNA and alters its conformation. May be involved in regulation of gene expression, nucleoid organization and DNA protection. The sequence is that of Nucleoid-associated protein Ccur92_18190 from Campylobacter curvus (strain 525.92).